A 345-amino-acid chain; its full sequence is Solute carrier family 25 member 43 (345 aa).

Solcar repeat units lie at residues 11–100, 104–195, and 199–297; these read TSSQ…IDEL, SQWR…QERH, and TSLQ…LYRN. The next 6 helical transmembrane spans lie at 16–36, 67–87, 109–129, 165–185, 204–224, and 261–281; these read LMCV…LEVV, FWKG…IHLA, IVAG…LEVV, GFSL…AVYI, FING…FETV, and VMAL…YFGL.

This sequence belongs to the mitochondrial carrier (TC 2.A.29) family.

It localises to the mitochondrion inner membrane. This chain is Solute carrier family 25 member 43 (slc25a43), found in Danio rerio (Zebrafish).